The primary structure comprises 376 residues: Protein-glutamate methylesterase/protein-glutamine glutaminase (376 aa).

A Response regulatory domain is found at 4-121; that stretch reads KVLVVDDSSF…ARNRDEAVSL (118 aa). A 4-aspartylphosphate modification is found at Asp-55. The disordered stretch occupies residues 142–161; that stretch reads SSQSTSTVESRTATTRTATS. Low complexity predominate over residues 145-161; sequence STSTVESRTATTRTATS. The region spanning 183–376 is the CheB-type methylesterase domain; it reads TGKKYQLTAI…ERMLVEVGLK (194 aa). Active-site residues include Ser-195, His-222, and Asp-318.

It belongs to the CheB family. In terms of processing, phosphorylated by CheA. Phosphorylation of the N-terminal regulatory domain activates the methylesterase activity.

It is found in the cytoplasm. It catalyses the reaction [protein]-L-glutamate 5-O-methyl ester + H2O = L-glutamyl-[protein] + methanol + H(+). It carries out the reaction L-glutaminyl-[protein] + H2O = L-glutamyl-[protein] + NH4(+). Its function is as follows. Involved in chemotaxis. Part of a chemotaxis signal transduction system that modulates chemotaxis in response to various stimuli. Catalyzes the demethylation of specific methylglutamate residues introduced into the chemoreceptors (methyl-accepting chemotaxis proteins or MCP) by CheR. Also mediates the irreversible deamidation of specific glutamine residues to glutamic acid. The polypeptide is Protein-glutamate methylesterase/protein-glutamine glutaminase (Aliivibrio fischeri (strain ATCC 700601 / ES114) (Vibrio fischeri)).